Reading from the N-terminus, the 396-residue chain is Diphosphomevalonate decarboxylase (396 aa).

(R)-5-diphosphomevalonate is bound by residues 19-22 (YWGK), R74, 153-158 (SGSACR), and T209.

Belongs to the diphosphomevalonate decarboxylase family. In terms of assembly, homodimer.

It catalyses the reaction (R)-5-diphosphomevalonate + ATP = isopentenyl diphosphate + ADP + phosphate + CO2. Its pathway is isoprenoid biosynthesis; isopentenyl diphosphate biosynthesis via mevalonate pathway; isopentenyl diphosphate from (R)-mevalonate: step 3/3. In terms of biological role, diphosphomevalonate decarboxylase; part of the second module of ergosterol biosynthesis pathway that includes the middle steps of the pathway. MVD1/ERG19 converts diphosphomevalonate into isopentenyl diphosphate. The second module is carried out in the vacuole and involves the formation of farnesyl diphosphate, which is also an important intermediate in the biosynthesis of ubiquinone, dolichol, heme and prenylated proteins. Activity by the mevalonate kinase ERG12 first converts mevalonate into 5-phosphomevalonate. 5-phosphomevalonate is then further converted to 5-diphosphomevalonate by the phosphomevalonate kinase ERG8. The diphosphomevalonate decarboxylase MVD1/ERG19 then produces isopentenyl diphosphate. The isopentenyl-diphosphate delta-isomerase IDI1 then catalyzes the 1,3-allylic rearrangement of the homoallylic substrate isopentenyl (IPP) to its highly electrophilic allylic isomer, dimethylallyl diphosphate (DMAPP). Finally the farnesyl diphosphate synthase ERG20 catalyzes the sequential condensation of isopentenyl pyrophosphate with dimethylallyl pyrophosphate, and then with the resultant geranylpyrophosphate to the ultimate product farnesyl pyrophosphate. This Saccharomyces cerevisiae (strain ATCC 204508 / S288c) (Baker's yeast) protein is Diphosphomevalonate decarboxylase.